Consider the following 75-residue polypeptide: DNA-directed RNA polymerase subunit omega (75 aa).

This sequence belongs to the RNA polymerase subunit omega family. In terms of assembly, the RNAP catalytic core consists of 2 alpha, 1 beta, 1 beta' and 1 omega subunit. When a sigma factor is associated with the core the holoenzyme is formed, which can initiate transcription.

It carries out the reaction RNA(n) + a ribonucleoside 5'-triphosphate = RNA(n+1) + diphosphate. In terms of biological role, promotes RNA polymerase assembly. Latches the N- and C-terminal regions of the beta' subunit thereby facilitating its interaction with the beta and alpha subunits. The chain is DNA-directed RNA polymerase subunit omega from Lysinibacillus sphaericus (strain C3-41).